A 173-amino-acid chain; its full sequence is ATP synthase subunit b (173 aa).

Residues 19-39 form a helical membrane-spanning segment; it reads IVWSLIILVIVAVFFYKFFMP.

This sequence belongs to the ATPase B chain family. F-type ATPases have 2 components, F(1) - the catalytic core - and F(0) - the membrane proton channel. F(1) has five subunits: alpha(3), beta(3), gamma(1), delta(1), epsilon(1). F(0) has three main subunits: a(1), b(2) and c(10-14). The alpha and beta chains form an alternating ring which encloses part of the gamma chain. F(1) is attached to F(0) by a central stalk formed by the gamma and epsilon chains, while a peripheral stalk is formed by the delta and b chains.

The protein localises to the cell membrane. Functionally, f(1)F(0) ATP synthase produces ATP from ADP in the presence of a proton or sodium gradient. F-type ATPases consist of two structural domains, F(1) containing the extramembraneous catalytic core and F(0) containing the membrane proton channel, linked together by a central stalk and a peripheral stalk. During catalysis, ATP synthesis in the catalytic domain of F(1) is coupled via a rotary mechanism of the central stalk subunits to proton translocation. Component of the F(0) channel, it forms part of the peripheral stalk, linking F(1) to F(0). The sequence is that of ATP synthase subunit b from Bifidobacterium longum (strain NCC 2705).